The primary structure comprises 148 residues: UPF0179 protein Mevan_0979 (148 aa).

It belongs to the UPF0179 family.

The protein is UPF0179 protein Mevan_0979 of Methanococcus vannielii (strain ATCC 35089 / DSM 1224 / JCM 13029 / OCM 148 / SB).